The primary structure comprises 189 residues: Pyridoxal 5'-phosphate synthase subunit PdxT (189 aa).

47–49 (GES) is a binding site for L-glutamine. The active-site Nucleophile is the Cys79. Residues Arg106 and 135–136 (IR) contribute to the L-glutamine site. Catalysis depends on charge relay system residues His171 and Glu173.

It belongs to the glutaminase PdxT/SNO family. In the presence of PdxS, forms a dodecamer of heterodimers. Only shows activity in the heterodimer.

The catalysed reaction is aldehydo-D-ribose 5-phosphate + D-glyceraldehyde 3-phosphate + L-glutamine = pyridoxal 5'-phosphate + L-glutamate + phosphate + 3 H2O + H(+). It catalyses the reaction L-glutamine + H2O = L-glutamate + NH4(+). It participates in cofactor biosynthesis; pyridoxal 5'-phosphate biosynthesis. Its function is as follows. Catalyzes the hydrolysis of glutamine to glutamate and ammonia as part of the biosynthesis of pyridoxal 5'-phosphate. The resulting ammonia molecule is channeled to the active site of PdxS. The polypeptide is Pyridoxal 5'-phosphate synthase subunit PdxT (Caldanaerobacter subterraneus subsp. tengcongensis (strain DSM 15242 / JCM 11007 / NBRC 100824 / MB4) (Thermoanaerobacter tengcongensis)).